A 585-amino-acid polypeptide reads, in one-letter code: Archaeosine synthase (585 aa).

A PUA domain is found at 516 to 584 (TKTVEIDGFV…IGVEIRHVEE (69 aa)).

This sequence belongs to the archaeosine synthase type 1 family. In terms of assembly, homodimer.

It catalyses the reaction 7-cyano-7-carbaguanosine(15) in tRNA + L-glutamine + H2O = archaeosine(15) in tRNA + L-glutamate. Its pathway is tRNA modification; archaeosine-tRNA biosynthesis. In terms of biological role, is responsible for the final step in the biosynthesis of archaeosine, a modified nucleoside present in the dihydrouridine loop (D-loop) of archaeal tRNA. Catalyzes the conversion of 7-cyano-7-deazaguanine (preQ0)-modified tRNA to archaeosine-tRNA, transforming a nitrile group to a formamidine group. This chain is Archaeosine synthase, found in Haloferax volcanii (strain ATCC 29605 / DSM 3757 / JCM 8879 / NBRC 14742 / NCIMB 2012 / VKM B-1768 / DS2) (Halobacterium volcanii).